The following is a 411-amino-acid chain: Corticotropin-releasing factor receptor 2 (411 aa).

The segment at residues 1-19 (MDAALLHSLLEANCSLALA) is a signal peptide (not cleaved). The Extracellular portion of the chain corresponds to 1–108 (MDAALLHSLL…EPILDDKQRK (108 aa)). N-linked (GlcNAc...) asparagine glycans are attached at residues asparagine 13, asparagine 41, asparagine 74, asparagine 86, and asparagine 94. Intrachain disulfides connect cysteine 14-cysteine 50, cysteine 40-cysteine 83, tryptophan 51-arginine 77, and cysteine 64-cysteine 98. The chain crosses the membrane as a helical span at residues 109 to 139 (YDLHYRIALVVNYLGHCVSVAALVAAFLLFL). The Cytoplasmic segment spans residues 140–146 (ALRSIRC). A helical membrane pass occupies residues 147–171 (LRNVIHWNLITTFILRNVMWFLLQL). Over 172 to 185 (VDHEVHESNEVWCR) the chain is Extracellular. An intrachain disulfide couples cysteine 184 to cysteine 254. The helical transmembrane segment at 186–214 (CITTIFNYFVVTNFFWMFVEGCYLHTAIV) threads the bilayer. The Cytoplasmic segment spans residues 215 to 221 (MTYSTER). Residues 222–249 (LRKCLFLFIGWCIPFPIIVAWAIGKLYY) form a helical membrane-spanning segment. Over 250-265 (ENEQCWFGKEPGDLVD) the chain is Extracellular. The chain crosses the membrane as a helical span at residues 266 to 291 (YIYQGPIILVLLINFVFLFNIVRILM). Over 292 to 302 (TKLRASTTSET) the chain is Cytoplasmic. Residues 303–327 (IQYRKAVKATLVLLPLLGITYMLFF) traverse the membrane as a helical segment. Topologically, residues 328–334 (VNPGEDD) are extracellular. Residues 335 to 364 (LSQIMFIYFNSFLQSFQGFFVSVFYCFFNG) form a helical membrane-spanning segment. The Cytoplasmic segment spans residues 365-411 (EVRSAVRKRWHRWQDHHSLRVPMARAMSIPTSPTRISFHSIKQTAAV).

This sequence belongs to the G-protein coupled receptor 2 family. In terms of assembly, monomer. Interacts (via N-terminal extracellular domain) with CRF, UCN, UCN2 and UCN3. Has highest affinity for UCN, and considerably lower affinity for CRF, UNC2 and UCN3. An N-glycosylation site within the signal peptide impedes its proper cleavage and function.

The protein resides in the cell membrane. In terms of biological role, G-protein coupled receptor for CRH (corticotropin-releasing factor), UCN (urocortin), UCN2 and UCN3. Has high affinity for UCN. Ligand binding causes a conformation change that triggers signaling via guanine nucleotide-binding proteins (G proteins) and down-stream effectors, such as adenylate cyclase. Promotes the activation of adenylate cyclase, leading to increased intracellular cAMP levels. The chain is Corticotropin-releasing factor receptor 2 (CRHR2) from Homo sapiens (Human).